Here is a 255-residue protein sequence, read N- to C-terminus: uncharacterized protein (255 aa).

The region spanning 4-59 (RNERLNLIRKRVDQYGQVAVKDLAIFLQVTPETVRKDLETLENDKLITRTHGGAIQ) is the HTH deoR-type domain. A DNA-binding region (H-T-H motif) is located at residues 21–40 (VAVKDLAIFLQVTPETVRKD).

This is an uncharacterized protein from Staphylococcus epidermidis (strain ATCC 12228 / FDA PCI 1200).